The primary structure comprises 901 residues: Serine/threonine-protein kinase-like protein CR4 (901 aa).

An N-terminal signal peptide occupies residues 1 to 22; the sequence is MDIVPVVALCCCLVLLPSWAYG. Repeat copies occupy residues 31–66, 70–105, 123–158, 160–193, 201–234, 251–285, and 290–328. The interval 31 to 328 is 7 X 36 AA repeats; sequence VSYGEDGPVF…PLALPMAVSP (298 aa). 2 N-linked (GlcNAc...) asparagine glycosylation sites follow: Asn-149 and Asn-177. N-linked (GlcNAc...) asparagine glycosylation is present at Asn-280. Residues 335–389 form a TNFR-Cys repeat; sequence SCSHGYYEYANHGEVGSGSKTCKPANSRLCLPCSVGCPDDSYESSPCNATADRVC. 3 cysteine pairs are disulfide-bonded: Cys-336-Cys-364, Cys-367-Cys-381, and Cys-371-Cys-389. Residue Asn-382 is glycosylated (N-linked (GlcNAc...) asparagine). The chain crosses the membrane as a helical span at residues 423–443; it reads IFVAEIAFAVILVFSVTAIAC. The region spanning 504-781 is the Protein kinase domain; it reads FSEDSQVGKG…KVTTALERAL (278 aa). Residues 510 to 518 and Lys-532 contribute to the ATP site; that span reads VGKGSFSCV. The Proton acceptor role is filled by Asp-633. A disordered region spans residues 845–901; that stretch reads VTSSQRRKSSASEADMDGRTTTDGRNVGSSIGDGLRSLEEEISPASPQENLYLQHNF. Positions 889 to 901 are enriched in polar residues; the sequence is ASPQENLYLQHNF.

This sequence belongs to the protein kinase superfamily. Ser/Thr protein kinase family. Homodimer. Autophosphorylated. As to expression, specifically expressed in the epidermal cells of paleas and lemmas.

The protein resides in the cell membrane. It localises to the endosome. It is found in the multivesicular body membrane. The enzyme catalyses L-seryl-[protein] + ATP = O-phospho-L-seryl-[protein] + ADP + H(+). It carries out the reaction L-threonyl-[protein] + ATP = O-phospho-L-threonyl-[protein] + ADP + H(+). In terms of biological role, receptor protein kinase. Could play a role in a differentiation signal. Controls formative cell division in meristems. Regulates epidermal cell differentiation in many organs. During floral organogenesis, required to maintain the interlocking of the palea and lemma, and fertility. Triggers culm elongation. This chain is Serine/threonine-protein kinase-like protein CR4, found in Oryza sativa subsp. japonica (Rice).